A 223-amino-acid polypeptide reads, in one-letter code: Rab-like protein 2A (223 aa).

Residues 28–35 (GDSAVGKS), 76–80 (DTAGQ), and 133–136 (NKID) contribute to the GTP site. Residues 200–223 (KLEQKEEDTSGQEQSDTTKSPSPS) form a disordered region. The span at 210–223 (GQEQSDTTKSPSPS) shows a compositional bias: polar residues.

The protein belongs to the small GTPase superfamily. Rab family. In terms of assembly, interacts with IFT27, IFT81, IFT172, ATP6V1E1, HK1, LDHC, MAPRE1 and HSPA2. Isoform 2 is expressed in the testis and localizes to the mid-piece of the sperm tail (at protein level). Isoform 2 is expressed at higher levels in testis than isoform 1. Isoform 1 and isoform 2 are widely expressed and notably within other tissues containing motile cilia including the lung, trachea, brain, ovary and kidney.

Functionally, plays an essential role in male fertility, sperm intra-flagellar transport, and tail assembly. Binds, in a GTP-regulated manner, to a specific set of effector proteins including key proteins involved in cilia development and function and delivers them into the growing sperm tail. The protein is Rab-like protein 2A (Rabl2) of Mus musculus (Mouse).